The following is a 401-amino-acid chain: Nodal homolog 3-A (401 aa).

Positions 1 to 18 are cleaved as a signal peptide; that stretch reads MAFLNLFFCLVFISPLMA. Positions 19–274 are excised as a propeptide; the sequence is MPPVLQGRKS…KVNGFRRLRR (256 aa). Asn168, Asn337, Asn341, and Asn344 each carry an N-linked (GlcNAc...) asparagine glycan. Disulfide bonds link Cys299–Cys365 and Cys328–Cys396.

It belongs to the TGF-beta family. In terms of assembly, monomer. The propeptide region interacts with bmp4 in a non-covalent manner. As to expression, expressed in the epithelial layer of the Spemann organizer during gastrulation.

The protein resides in the secreted. Exhibits mesoderm-dorsalizing activity and neural-inducing activity, but lacks mesoderm-inducing activity. Regulates the expression of specific mesodermal and neural genes. Induces convergent extension movements at the embryonic midline by activating the fgf signaling pathway to induce t/bra expression in the organizer region. Acts with wnt11 to induce Spemann organizer cells and induce axis formation. The unprocessed protein antagonizes bmp-signaling. This chain is Nodal homolog 3-A (nodal3-a), found in Xenopus laevis (African clawed frog).